The chain runs to 357 residues: UPF0283 membrane protein BMEI0952 (357 aa).

The tract at residues 1-36 (MSDKTPRKPTAFRLEQPARVSAASEQEEPRRPRAVK) is disordered. Residues 27-36 (EEPRRPRAVK) show a composition bias toward basic and acidic residues. A run of 2 helical transmembrane segments spans residues 78-98 (ILFG…TEDL) and 109-129 (LGWT…AIIL).

Belongs to the UPF0283 family.

The protein localises to the cell inner membrane. In Brucella melitensis biotype 1 (strain ATCC 23456 / CCUG 17765 / NCTC 10094 / 16M), this protein is UPF0283 membrane protein BMEI0952.